The chain runs to 215 residues: UPF0502 protein YceH (215 aa).

Residue lysine 80 is modified to N6-acetyllysine.

It belongs to the UPF0502 family.

The polypeptide is UPF0502 protein YceH (Escherichia coli O7:K1 (strain IAI39 / ExPEC)).